A 505-amino-acid chain; its full sequence is ATP synthase subunit alpha (505 aa).

171–178 contacts ATP; it reads GDRQTGKT.

It belongs to the ATPase alpha/beta chains family. In terms of assembly, F-type ATPases have 2 components, CF(1) - the catalytic core - and CF(0) - the membrane proton channel. CF(1) has five subunits: alpha(3), beta(3), gamma(1), delta(1), epsilon(1). CF(0) has three main subunits: a(1), b(2) and c(9-12). The alpha and beta chains form an alternating ring which encloses part of the gamma chain. CF(1) is attached to CF(0) by a central stalk formed by the gamma and epsilon chains, while a peripheral stalk is formed by the delta and b chains.

The protein resides in the cell inner membrane. The catalysed reaction is ATP + H2O + 4 H(+)(in) = ADP + phosphate + 5 H(+)(out). Produces ATP from ADP in the presence of a proton gradient across the membrane. The alpha chain is a regulatory subunit. The sequence is that of ATP synthase subunit alpha from Campylobacter fetus subsp. fetus (strain 82-40).